The following is a 216-amino-acid chain: Ornithine decarboxylase antizyme 1 (216 aa).

It belongs to the ODC antizyme family. Interacts with ODC1 and thereby sterically blocks ODC homodimerization.

Ornithine decarboxylase (ODC) antizyme protein that negatively regulates ODC activity and intracellular polyamine biosynthesis and uptake in response to increased intracellular polyamine levels. Binds to ODC monomers, inhibiting the assembly of the functional ODC homodimer, and targets the monomers for ubiquitin-independent proteolytic destruction by the 26S proteasome. The chain is Ornithine decarboxylase antizyme 1 (oaz1) from Xenopus laevis (African clawed frog).